Consider the following 101-residue polypeptide: Large ribosomal subunit protein uL24 (101 aa).

Belongs to the universal ribosomal protein uL24 family. Part of the 50S ribosomal subunit.

Functionally, one of two assembly initiator proteins, it binds directly to the 5'-end of the 23S rRNA, where it nucleates assembly of the 50S subunit. Its function is as follows. One of the proteins that surrounds the polypeptide exit tunnel on the outside of the subunit. This Streptococcus pyogenes serotype M2 (strain MGAS10270) protein is Large ribosomal subunit protein uL24.